A 257-amino-acid polypeptide reads, in one-letter code: MPVLSKLLPTLTLTLPLLAGPCLAAANPKLSKRFTFPIPSSTGSVTFSEPYEIAAGEIYDGELQTFGRGVECTGQDEGGESDTVFIVQEGGTLKNAIIGADQIEGVYCLGACTIENVWWEKVCEDALSLKEGSGPYVVTGGGAQGAEDKVIQHNSEGEVIVDGFTVYDFGKLYRSCGTCGDIQRSATITNVVAVSGSTIAGANGNFGDVVTIDSSNCATDVSAICTTYEADADGGEPEEVSTDVTEACVFEELPACE.

The signal sequence occupies residues 1–24 (MPVLSKLLPTLTLTLPLLAGPCLA).

The protein belongs to the polysaccharide lyase 3 family. It depends on Ca(2+) as a cofactor.

It localises to the secreted. The enzyme catalyses Eliminative cleavage of (1-&gt;4)-alpha-D-galacturonan to give oligosaccharides with 4-deoxy-alpha-D-galact-4-enuronosyl groups at their non-reducing ends.. In terms of biological role, pectinolytic enzyme consist of four classes of enzymes: pectin lyase, polygalacturonase, pectin methylesterase and rhamnogalacturonase. Among pectinolytic enzymes, pectin lyase is the most important in depolymerization of pectin, since it cleaves internal glycosidic bonds of highly methylated pectins. Favors pectate, the anion, over pectin, the methyl ester. This Emericella nidulans (strain FGSC A4 / ATCC 38163 / CBS 112.46 / NRRL 194 / M139) (Aspergillus nidulans) protein is Probable pectate lyase G (plyG).